The primary structure comprises 367 residues: tRNA (guanine(26)-N(2))-dimethyltransferase (367 aa).

A Trm1 methyltransferase domain is found at 1-365; it reads MRVSEGRVTV…ADVVEIREAT (365 aa). Residues arginine 34, arginine 64, aspartate 79, aspartate 105, and alanine 106 each contribute to the S-adenosyl-L-methionine site. Cysteine 234, cysteine 237, cysteine 254, and cysteine 257 together coordinate Zn(2+).

Belongs to the class I-like SAM-binding methyltransferase superfamily. Trm1 family.

The enzyme catalyses guanosine(26) in tRNA + 2 S-adenosyl-L-methionine = N(2)-dimethylguanosine(26) in tRNA + 2 S-adenosyl-L-homocysteine + 2 H(+). Functionally, dimethylates a single guanine residue at position 26 of a number of tRNAs using S-adenosyl-L-methionine as donor of the methyl groups. In Haloarcula marismortui (strain ATCC 43049 / DSM 3752 / JCM 8966 / VKM B-1809) (Halobacterium marismortui), this protein is tRNA (guanine(26)-N(2))-dimethyltransferase.